A 248-amino-acid polypeptide reads, in one-letter code: Amphiregulin (248 aa).

An N-terminal signal peptide occupies residues 1–26 (MRTPLLPLARSVLLLLVLGSGHYAAA). Residues 27-99 (LELNDPSSGK…IIDDSVRVEQ (73 aa)) constitute a propeptide that is removed on maturation. 3 disordered regions span residues 29–48 (LNDP…SAGG), 57–77 (VSTI…YDYS), and 100–136 (VIKP…KKKK). Polar residues predominate over residues 58–70 (STISEMPSGSELS). Over residues 100–116 (VIKPKKNKTEGEKSTEK) the composition is skewed to basic and acidic residues. A glycan (N-linked (GlcNAc...) asparagine) is linked at Asn106. A compositionally biased stretch (basic residues) spans 117–136 (PKRKKKGGKNGKGRRNKKKK). In terms of domain architecture, EGF-like spans 135–175 (KKNPCTAKFQNFCIHGECRYIENLEVVTCNCHQDYFGERCG). Disulfide bonds link Cys139-Cys152, Cys147-Cys163, and Cys165-Cys174. A helical membrane pass occupies residues 192–215 (IAVVAVTIFVSAIILAAIGIGIVI). Asn241 is a glycosylation site (N-linked (GlcNAc...) asparagine).

It belongs to the amphiregulin family. As to quaternary structure, the immature precursor interacts with CNIH.

It is found in the membrane. In terms of biological role, ligand of the EGF receptor/EGFR. Autocrine growth factor as well as a mitogen for a broad range of target cells including astrocytes, Schwann cells and fibroblasts. The chain is Amphiregulin (Areg) from Mus musculus (Mouse).